A 141-amino-acid chain; its full sequence is Hemoglobin subunit alpha (141 aa).

Positions valine 1–arginine 141 constitute a Globin domain. Serine 3 is subject to Phosphoserine. The residue at position 7 (lysine 7) is an N6-succinyllysine. Threonine 8 carries the post-translational modification Phosphothreonine. An N6-succinyllysine modification is found at lysine 11. At lysine 16 the chain carries N6-acetyllysine; alternate. Position 16 is an N6-succinyllysine; alternate (lysine 16). Tyrosine 24 is subject to Phosphotyrosine. Residue lysine 40 is modified to N6-succinyllysine. Histidine 58 serves as a coordination point for O2. Position 87 (histidine 87) interacts with heme b. A Phosphoserine modification is found at serine 102. Threonine 108 bears the Phosphothreonine mark. 2 positions are modified to phosphoserine: serine 124 and serine 131. Threonine 134 and threonine 137 each carry phosphothreonine. Phosphoserine is present on serine 138.

This sequence belongs to the globin family. In terms of assembly, heterotetramer of two alpha chains and two beta chains. As to expression, red blood cells.

Functionally, involved in oxygen transport from the lung to the various peripheral tissues. Hemopressin acts as an antagonist peptide of the cannabinoid receptor CNR1. Hemopressin-binding efficiently blocks cannabinoid receptor CNR1 and subsequent signaling. This Tursiops truncatus (Atlantic bottle-nosed dolphin) protein is Hemoglobin subunit alpha (HBA).